The sequence spans 33 residues: Trypsin inhibitor 1 (33 aa).

Cystine bridges form between C1–C17, C8–C21, and C16–C32.

As to expression, expressed in leaves and fruit flesh (at protein level).

Functionally, inhibits trypsin (IC(50)=471 nM). The protein is Trypsin inhibitor 1 of Beta vulgaris subsp. vulgaris (Beet).